A 114-amino-acid polypeptide reads, in one-letter code: Large ribosomal subunit protein bL20 (114 aa).

Belongs to the bacterial ribosomal protein bL20 family.

Binds directly to 23S ribosomal RNA and is necessary for the in vitro assembly process of the 50S ribosomal subunit. It is not involved in the protein synthesizing functions of that subunit. This is Large ribosomal subunit protein bL20 from Flavobacterium johnsoniae (strain ATCC 17061 / DSM 2064 / JCM 8514 / BCRC 14874 / CCUG 350202 / NBRC 14942 / NCIMB 11054 / UW101) (Cytophaga johnsonae).